A 357-amino-acid polypeptide reads, in one-letter code: MCPLMAENHEVIEEGNSSELPLSAEDAKKLTELAENVLQGWDVQAEKIDVIQGNQMALVWKVHTDSGAVCLKRIHRPEKKALFSIFAQDYLAKKGMNVPGILPNKKGSLYSKHGSFLFVVYDWIEGRPFELTVKQDLEFIMKGLADFHTASVGYQPPNGVPIFTKLGRWPNHYTKRCKQMETWKLMAEAEKEDPFSQLYLQEIDGFIEDGLRIKDRLLQSTYVPWTEQLKKSPNLCHQDYGTGNTLLGENEQIWVIDLDTVSFDLPIRDLRKMIIPLLDTTGVWDDETFNVMLNAYESRAPLTEEQKQVMFIDMLFPYELYDVIREKYVRKSALPKEELESAFEYERIKANALRQLI.

This sequence belongs to the CotS family.

The protein resides in the spore coat. In Bacillus subtilis (strain 168), this protein is Spore coat protein I (cotI).